Here is a 141-residue protein sequence, read N- to C-terminus: Putative pre-16S rRNA nuclease (141 aa).

The protein belongs to the YqgF nuclease family.

It is found in the cytoplasm. Functionally, could be a nuclease involved in processing of the 5'-end of pre-16S rRNA. This chain is Putative pre-16S rRNA nuclease, found in Coxiella burnetii (strain CbuK_Q154) (Coxiella burnetii (strain Q154)).